A 408-amino-acid chain; its full sequence is Phosphatidylinositol transfer protein CSR1 (408 aa).

S2 carries the N-acetylserine modification. At S2 the chain carries Phosphoserine. The CRAL-TRIO domain maps to 157–317 (ETGVIKNLEL…YLGGENDNDL (161 aa)).

It belongs to the PITP family. In terms of assembly, forms a complex with 2 TSA2 subunits. Binds phosphatidylinositol (PtdIns).

The protein resides in the cytoplasm. It localises to the microsome. It is found in the endosome. The enzyme catalyses a 1,2-diacyl-sn-glycero-3-phospho-(1D-myo-inositol)(in) = a 1,2-diacyl-sn-glycero-3-phospho-(1D-myo-inositol)(out). Non-classical phosphatidylinositol (PtdIns) transfer protein (PITP), which exhibits PtdIns-binding/transfer activity in the absence of detectable PtdCho-binding/transfer activity. Activates SPO14/PLD1 (phospholipase D1) by stimulating phosphoinositide synthesis via the STT4 PtdIns 4-kinase. Modulates ArfGAP function through effects on SPO14 activity. Inhibits phosphatidylcholine degradation by PLB1 (phospholipase B1). May also regulate post-Golgi membrane-trafficking events and have a role resistance to oxidative stress. Inhibits fatty acid synthase activity in response to heme depletion and oleic acid starvation, preventing saturated fatty acid (SFA) accumulation. This is Phosphatidylinositol transfer protein CSR1 (CSR1) from Saccharomyces cerevisiae (strain ATCC 204508 / S288c) (Baker's yeast).